Reading from the N-terminus, the 120-residue chain is Large ribosomal subunit protein uL14 (120 aa).

The protein belongs to the universal ribosomal protein uL14 family. In terms of assembly, part of the 50S ribosomal subunit. Forms a cluster with proteins L3 and L19. In the 70S ribosome, L14 and L19 interact and together make contacts with the 16S rRNA in bridges B5 and B8.

Binds to 23S rRNA. Forms part of two intersubunit bridges in the 70S ribosome. In Dictyoglomus turgidum (strain DSM 6724 / Z-1310), this protein is Large ribosomal subunit protein uL14.